A 454-amino-acid polypeptide reads, in one-letter code: DNA-binding protein BIN4 (454 aa).

Disordered stretches follow at residues 24–53 (LLSL…DDGD), 103–249 (AGKE…DKDT), and 380–454 (TFES…KAKK). Residues 112–123 (DCEKLSSKHKDA) are compositionally biased toward basic and acidic residues. A compositionally biased stretch (polar residues) spans 132–150 (LVSSDSEPSSPIKQEVTVS). Over residues 229 to 249 (TPKEENCAQEILKTEDKDKDT) the composition is skewed to basic and acidic residues. A compositionally biased stretch (basic residues) spans 438–454 (PAKKARNSAPKKPKAKK).

Interacts with TOP6A, RHL1 and itself, but not with TOP6B. Expressed in expanding cotyledons, vascular cells, elongating root cells, developing leaf trichomes, root and apical meristems and lateral root primordia.

It localises to the nucleus. Its function is as follows. Component of the DNA topoisomerase VI complex. Binds to DNA. Required for chromatin organization and progression of endoreduplication cycles. The loss of BIN4 activates the ATM- and ATR-dependent DNA damage responses in postmitotic cells and induces the ectopic expression of the mitotic G2/M-specific cyclin B1;1 gene in non-dividing cells. In Arabidopsis thaliana (Mouse-ear cress), this protein is DNA-binding protein BIN4 (BIN4).